The sequence spans 120 residues: Glycine cleavage system H protein (120 aa).

One can recognise a Lipoyl-binding domain in the interval Asp19–Asp101. Lys60 is modified (N6-lipoyllysine).

Belongs to the GcvH family. In terms of assembly, the glycine cleavage system is composed of four proteins: P, T, L and H. (R)-lipoate serves as cofactor.

The glycine cleavage system catalyzes the degradation of glycine. The H protein shuttles the methylamine group of glycine from the P protein to the T protein. The sequence is that of Glycine cleavage system H protein from Deinococcus geothermalis (strain DSM 11300 / CIP 105573 / AG-3a).